Consider the following 262-residue polypeptide: ABSCISIC ACID-INSENSITIVE 5-like protein 3 (262 aa).

Phosphoserine is present on residues Ser-21, Ser-43, and Ser-66. The residue at position 104 (Thr-104) is a Phosphothreonine. Residues Val-190–Lys-253 form the bZIP domain. Residues Arg-192 to Lys-211 form a basic motif region. The leucine-zipper stretch occupies residues Leu-218–Leu-232. Residues Glu-239–Trp-252 are compositionally biased toward basic and acidic residues. The disordered stretch occupies residues Glu-239–Leu-262.

The protein belongs to the bZIP family. ABI5 subfamily. In terms of assembly, DNA-binding heterodimer with ABI5/DPBF1, DPBF2 or AREB3/DPBF3. Interacts with the AFP proteins AFP2, AFP3 and AFP4. In terms of tissue distribution, predominantly expressed in seeds.

The protein localises to the nucleus. Its function is as follows. Binds to the embryo specification element and the ABA-responsive element (ABRE) of the Dc3 gene promoter and to the ABRE of the Em1 gene promoter. Could participate in abscisic acid-regulated gene expression during seed development. This chain is ABSCISIC ACID-INSENSITIVE 5-like protein 3 (DPBF4), found in Arabidopsis thaliana (Mouse-ear cress).